The primary structure comprises 281 residues: 3-methyl-2-oxobutanoate hydroxymethyltransferase (281 aa).

2 residues coordinate Mg(2+): D44 and D83. 3-methyl-2-oxobutanoate contacts are provided by residues 44–45, D83, and K112; that span reads DS. E114 provides a ligand contact to Mg(2+). The Proton acceptor role is filled by E180. Residues 251-281 form a disordered region; that stretch reads RNGTFPGPEHSSRMDPAELAAALGSQDQATE.

It belongs to the PanB family. In terms of assembly, homodecamer; pentamer of dimers. Mg(2+) serves as cofactor.

It localises to the cytoplasm. The enzyme catalyses 3-methyl-2-oxobutanoate + (6R)-5,10-methylene-5,6,7,8-tetrahydrofolate + H2O = 2-dehydropantoate + (6S)-5,6,7,8-tetrahydrofolate. Its pathway is cofactor biosynthesis; (R)-pantothenate biosynthesis; (R)-pantoate from 3-methyl-2-oxobutanoate: step 1/2. Functionally, catalyzes the reversible reaction in which hydroxymethyl group from 5,10-methylenetetrahydrofolate is transferred onto alpha-ketoisovalerate to form ketopantoate. This chain is 3-methyl-2-oxobutanoate hydroxymethyltransferase, found in Chloroflexus aurantiacus (strain ATCC 29364 / DSM 637 / Y-400-fl).